The primary structure comprises 358 residues: 3-isopropylmalate dehydrogenase (358 aa).

Residue 75–88 participates in NAD(+) binding; that stretch reads GPKWETLPPEKQPE. 4 residues coordinate substrate: arginine 96, arginine 106, arginine 135, and aspartate 225. Mg(2+) contacts are provided by aspartate 225, aspartate 249, and aspartate 253. NAD(+) is bound at residue 283–295; it reads GSAPDIAGKGVAN.

This sequence belongs to the isocitrate and isopropylmalate dehydrogenases family. LeuB type 1 subfamily. Homodimer. It depends on Mg(2+) as a cofactor. The cofactor is Mn(2+).

It localises to the cytoplasm. It carries out the reaction (2R,3S)-3-isopropylmalate + NAD(+) = 4-methyl-2-oxopentanoate + CO2 + NADH. The protein operates within amino-acid biosynthesis; L-leucine biosynthesis; L-leucine from 3-methyl-2-oxobutanoate: step 3/4. Functionally, catalyzes the oxidation of 3-carboxy-2-hydroxy-4-methylpentanoate (3-isopropylmalate) to 3-carboxy-4-methyl-2-oxopentanoate. The product decarboxylates to 4-methyl-2 oxopentanoate. The polypeptide is 3-isopropylmalate dehydrogenase (Leptospira interrogans serogroup Icterohaemorrhagiae serovar copenhageni (strain Fiocruz L1-130)).